The sequence spans 347 residues: Very-long-chain 3-oxoacyl-CoA reductase (347 aa).

Residues 20–40 (LLWVVFGLGVLKCTTLSLRFL) traverse the membrane as a helical segment. 7 residues coordinate NADP(+): Val66, Asp120, Asn147, Tyr223, Lys227, Val256, and Ser258. Residue Tyr223 is the Proton donor of the active site. Catalysis depends on Lys227, which acts as the Lowers pKa of active site Tyr.

It belongs to the short-chain dehydrogenases/reductases (SDR) family. As to quaternary structure, interacts with the fatty acid elongation system components ELO3 and TSC13.

The protein resides in the endoplasmic reticulum membrane. The enzyme catalyses a very-long-chain (3R)-3-hydroxyacyl-CoA + NADP(+) = a very-long-chain 3-oxoacyl-CoA + NADPH + H(+). Its pathway is lipid metabolism; fatty acid biosynthesis. Its function is as follows. Component of the microsomal membrane bound fatty acid elongation system, which produces the 26-carbon very long-chain fatty acids (VLCFA) from palmitate. Catalyzes the reduction of the 3-ketoacyl-CoA intermediate that is formed in each cycle of fatty acid elongation. VLCFAs serve as precursors for ceramide and sphingolipids. The protein is Very-long-chain 3-oxoacyl-CoA reductase of Saccharomyces cerevisiae (strain RM11-1a) (Baker's yeast).